An 849-amino-acid polypeptide reads, in one-letter code: Membrane protein-large ribosomal subunit bL9 fusion protein (849 aa).

The unknown stretch occupies residues 1–680 (MFSKNKHNTK…TQLEGTNIKT (680 aa)). The next 2 membrane-spanning stretches (helical) occupy residues 11 to 31 (FIVI…FDFQ) and 64 to 84 (IIFF…IISF). The region spanning 214–342 (KTLAIAMIAF…GGDQVVVNIE (129 aa)) is the GGDEF domain. Residues 681-849 (VTDTLKHFLK…FLNVTERKSK (169 aa)) form a large ribosomal subunit protein bL9 region.

The protein belongs to the bacterial ribosomal protein bL9 family.

The protein localises to the cell membrane. Its function is as follows. Binds to the 23S rRNA. This Aster yellows witches'-broom phytoplasma (strain AYWB) protein is Membrane protein-large ribosomal subunit bL9 fusion protein.